We begin with the raw amino-acid sequence, 123 residues long: Large ribosomal subunit protein uL29 (123 aa).

The disordered stretch occupies residues 84-123; it reads RPKKTRAMRRRLNKHEEGLKTKKQQRKERLYPPRKYAVKA. The segment covering 86 to 96 has biased composition (basic residues); sequence KKTRAMRRRLN.

The protein belongs to the universal ribosomal protein uL29 family. In terms of assembly, component of the large ribosomal subunit.

It localises to the cytoplasm. Functionally, component of the large ribosomal subunit. The ribosome is a large ribonucleoprotein complex responsible for the synthesis of proteins in the cell. The sequence is that of Large ribosomal subunit protein uL29 (RPL35) from Ophiophagus hannah (King cobra).